The chain runs to 428 residues: CRS2-associated factor 1, mitochondrial (428 aa).

A mitochondrion-targeting transit peptide spans 1–21 (MLLLAGLLRRARPPRRPSVRR). 2 disordered regions span residues 33–100 (PPAS…REPK) and 129–152 (HADD…RERV). CRM domains lie at 155–253 (EPLT…KRPV) and 275–371 (EGLT…IQDN). The disordered stretch occupies residues 378–428 (SVLEEESAGAESENGDQEQASSDWASDECSQLSSSDEMPDDKSAISEADSD). Over residues 380 to 393 (LEEESAGAESENGD) the composition is skewed to acidic residues. The span at 394–413 (QEQASSDWASDECSQLSSSD) shows a compositional bias: polar residues.

As to quaternary structure, part of large ribonucleo-protein complexes that include group IIB introns.

The protein localises to the mitochondrion. Functionally, may be involved in the splicing of group IIB introns in mitochondria. The polypeptide is CRS2-associated factor 1, mitochondrial (Oryza sativa subsp. japonica (Rice)).